Here is a 1058-residue protein sequence, read N- to C-terminus: Carbamoyl phosphate synthase large chain (1058 aa).

Residues 1 to 401 (MPKRTDIQKI…SLLKACRSLE (401 aa)) are carboxyphosphate synthetic domain. Residues Arg-129, Arg-169, Gly-175, Gly-176, Arg-208, Ile-210, Glu-215, Gly-241, Ile-242, His-243, Gln-284, and Glu-298 each coordinate ATP. Residues 133-327 (KQLMEELEQP…IAKLAAKIAV (195 aa)) enclose the ATP-grasp 1 domain. Residues Gln-284, Glu-298, and Asn-300 each coordinate Mg(2+). Mn(2+) is bound by residues Gln-284, Glu-298, and Asn-300. The segment at 402–546 (IGVHHNEIPE…YSTYGWENES (145 aa)) is oligomerization domain. A carbamoyl phosphate synthetic domain region spans residues 547 to 929 (IKSDKESVLV…ALYKAFEASY (383 aa)). The ATP-grasp 2 domain occupies 671 to 861 (EQALKELDIP…MAQVATKLIL (191 aa)). Residues Arg-707, Ser-746, Ile-748, Glu-752, Gly-777, Val-778, His-779, Ser-780, Gln-820, and Glu-832 each coordinate ATP. Mg(2+) contacts are provided by Gln-820, Glu-832, and Asn-834. Residues Gln-820, Glu-832, and Asn-834 each contribute to the Mn(2+) site. Residues 930 to 1058 (LHLPTFGNVV…ESRSFVTEAI (129 aa)) form the MGS-like domain. The tract at residues 930 to 1058 (LHLPTFGNVV…ESRSFVTEAI (129 aa)) is allosteric domain.

This sequence belongs to the CarB family. Composed of two chains; the small (or glutamine) chain promotes the hydrolysis of glutamine to ammonia, which is used by the large (or ammonia) chain to synthesize carbamoyl phosphate. Tetramer of heterodimers (alpha,beta)4. Mg(2+) is required as a cofactor. The cofactor is Mn(2+).

The catalysed reaction is hydrogencarbonate + L-glutamine + 2 ATP + H2O = carbamoyl phosphate + L-glutamate + 2 ADP + phosphate + 2 H(+). It carries out the reaction hydrogencarbonate + NH4(+) + 2 ATP = carbamoyl phosphate + 2 ADP + phosphate + 2 H(+). It participates in amino-acid biosynthesis; L-arginine biosynthesis; carbamoyl phosphate from bicarbonate: step 1/1. It functions in the pathway pyrimidine metabolism; UMP biosynthesis via de novo pathway; (S)-dihydroorotate from bicarbonate: step 1/3. In terms of biological role, large subunit of the glutamine-dependent carbamoyl phosphate synthetase (CPSase). CPSase catalyzes the formation of carbamoyl phosphate from the ammonia moiety of glutamine, carbonate, and phosphate donated by ATP, constituting the first step of 2 biosynthetic pathways, one leading to arginine and/or urea and the other to pyrimidine nucleotides. The large subunit (synthetase) binds the substrates ammonia (free or transferred from glutamine from the small subunit), hydrogencarbonate and ATP and carries out an ATP-coupled ligase reaction, activating hydrogencarbonate by forming carboxy phosphate which reacts with ammonia to form carbamoyl phosphate. The protein is Carbamoyl phosphate synthase large chain of Streptococcus pneumoniae (strain ATCC 700669 / Spain 23F-1).